A 195-amino-acid polypeptide reads, in one-letter code: MDYIVSPTSSEPYEFYRDRTFRGGANGNQTNMDTSPEDITDSDEQNDTTTTTSEMSSTSSVPSIGENKVSKNNKSAGISKISDSKLIFDSDNKDQDDEDDEDDEELEGLDTEGGFVLSNSDITTSDLYNLQMRIFRSETETDDDTDSETTENVRRALNNINSRKNIFDTEDRKILNMNSTEKWTRKTIKKNNKYH.

Over residues 1-11 (MDYIVSPTSSE) the composition is skewed to polar residues. Residues 1–118 (MDYIVSPTSS…LDTEGGFVLS (118 aa)) are disordered. Acidic residues predominate over residues 35–46 (SPEDITDSDEQN). The span at 47-63 (DTTTTTSEMSSTSSVPS) shows a compositional bias: low complexity. Basic and acidic residues predominate over residues 82-93 (SDSKLIFDSDNK). Positions 94 to 110 (DQDDEDDEDDEELEGLD) are enriched in acidic residues.

This is an uncharacterized protein from Acanthamoeba polyphaga mimivirus (APMV).